Consider the following 250-residue polypeptide: DNA repair protein RecO (250 aa).

This sequence belongs to the RecO family.

Involved in DNA repair and RecF pathway recombination. In Staphylococcus aureus (strain MRSA252), this protein is DNA repair protein RecO.